The following is a 574-amino-acid chain: Interleukin-1 receptor-like 2 (574 aa).

An N-terminal signal peptide occupies residues 1–21 (MGVTSLLFCGVFFLLLLFVAA). Residues 22–338 (DTCEDIFMHN…ILIYPVPDFR (317 aa)) are Extracellular-facing. Ig-like C2-type domains lie at 25–113 (EDIF…VNLT), 132–215 (PDVY…IRNY), and 225–321 (YGRR…TCHA). N-linked (GlcNAc...) asparagine glycosylation is found at N43, N55, and N111. Residues C44 and C97 are joined by a disulfide bond. C149 and C199 are oxidised to a cystine. 6 N-linked (GlcNAc...) asparagine glycosylation sites follow: N231, N237, N253, N269, N290, and N302. Residues C252 and C319 are joined by a disulfide bond. The helical transmembrane segment at 339–359 (AYLLGGLMAFLLLVVSVLFIY) threads the bilayer. The Cytoplasmic portion of the chain corresponds to 360 to 574 (NSFKIDIMLW…CNAATGLITP (215 aa)). The TIR domain occupies 384–539 (KLYDAYVLYP…KFWKKVRYHM (156 aa)). The active site involves E470.

It belongs to the interleukin-1 receptor family. Interacts with IL1RAP; the association is enhanced by IL36B indicative for an functional signaling complex and inhibited by IL36RN. In terms of tissue distribution, expressed in bone marrow-derived dendritic cells, splenic CD4(+) T-cells, bone marrow-derived macrophages and bone marrow-derived neutrophils.

It is found in the membrane. The enzyme catalyses NAD(+) + H2O = ADP-D-ribose + nicotinamide + H(+). Functionally, receptor for interleukin-36 (IL36A, IL36B and IL36G). After binding to interleukin-36 associates with the coreceptor IL1RAP to form the interleukin-36 receptor complex which mediates interleukin-36-dependent activation of NF-kappa-B, MAPK and other pathways. The IL-36 signaling system is thought to be present in epithelial barriers and to take part in local inflammatory response; it is similar to the IL-1 system. Seems to be involved in skin inflammatory response by induction of the IL-23/IL-17/IL-22 pathway. The polypeptide is Interleukin-1 receptor-like 2 (Il1rl2) (Mus musculus (Mouse)).